The primary structure comprises 828 residues: Calpain-A (828 aa).

The 14-residue stretch at 1-14 folds into the EF-hand 1 domain; that stretch reads MDDLRGFLRQAGQE. The Calpain catalytic domain maps to 88 to 387; sequence LFEDPLFPAS…FDRVEICNLS (300 aa). Catalysis depends on residues cysteine 143, histidine 299, and asparagine 327. Positions 388 to 557 are domain III; that stretch reads PDSLTEDQQN…TQNNMEENDD (170 aa). The segment at 558–577 is linker; it reads HVGYGGKADTITPGFPTPKP. Residues 578 to 828 are domain IV; it reads IDPQKEGLRR…EEWIERTIYS (251 aa). EF-hand domains are found at residues 579-614, 699-734, 729-764, and 764-799; these read DPQK…SMRD, FSKD…IAKW, SEIA…AGYH, and HLNN…IKTY. 9 residues coordinate Ca(2+): aspartate 712, aspartate 714, serine 716, lysine 718, glutamate 723, aspartate 742, threonine 746, arginine 748, and glutamine 753.

The protein belongs to the peptidase C2 family. Undergoes calcium-dependent autolytic cleavage between Lys-54 and Asn-55, which is necessary for activation of the protein. Localized to the anterior and posterior embryonic poles just after fertilization. Becomes distributed around the polar buds and just below the pole cells of the posterior pole during cleavage cycles. During these nuclear divisions anterior localization disappears. Localized to actin caps that underlie the plasma membrane, immediately above each nucleus at cleavage cycles 8 and 9. Localized to a small set of nerve, midgut and blood cells in adults.

The protein localises to the cytoplasm. With respect to regulation, activated by millimolar concentrations of calcium, and by phosphatidylinositol 4,5-diphosphate, phosphatidylinositol 4-monophosphate, phosphatidylinositol and phosphatidic acid. Functionally, calcium-regulated non-lysosomal thiol-protease. Involved in the organization of the actin-related cytoskeleton during embryogenesis. The polypeptide is Calpain-A (CalpA) (Drosophila melanogaster (Fruit fly)).